A 408-amino-acid chain; its full sequence is Zinc chaperone AztD (408 aa).

The N-terminal stretch at 1 to 21 (MLRHLAGASALALTLAGAGFA) is a signal peptide. Residues 23–29 (DHDHDHE) carry the N-terminal Zn(2+)-binding motif; binds a third Zn(2+) with low affinity motif. Residues histidine 99, histidine 102, aspartate 104, histidine 124, histidine 167, histidine 218, and histidine 408 each coordinate Zn(2+). Cysteine 214 and cysteine 231 are oxidised to a cystine.

Monomer.

The protein resides in the periplasm. In terms of biological role, acts as a zinc chaperone in the AztABCD zinc transport system. Directly transfers one zinc cation to the solute binding protein AztC; the transfer occurs without the formation of a stable interaction. Binds 3 Zn(2+), two with high affinity and one with low affinity, and transfers only Zn(2+) bound to site 2 to AztC. Likely functions to store zinc in the periplasm and may be important for zinc accumulation in zinc-limited environments. The sequence is that of Zinc chaperone AztD from Paracoccus denitrificans (strain Pd 1222).